The sequence spans 225 residues: Riboflavin kinase (225 aa).

The segment at methionine 1 to threonine 89 is unknown. The segment at leucine 90 to lysine 225 is riboflavin kinase. Glycine 99 to glutamine 104 provides a ligand contact to CDP. Mg(2+) is bound by residues threonine 128 and asparagine 130. The FMN site is built by threonine 185 and glutamate 193. Valine 198–arginine 201 provides a ligand contact to CDP.

This sequence belongs to the archaeal riboflavin kinase family. Mg(2+) serves as cofactor.

The enzyme catalyses riboflavin + CTP = CDP + FMN + H(+). It participates in cofactor biosynthesis; FMN biosynthesis; FMN from riboflavin (CTP route): step 1/1. Functionally, catalyzes the CTP-dependent phosphorylation of riboflavin (vitamin B2) to form flavin mononucleotide (FMN). The chain is Riboflavin kinase (ribK) from Methanosarcina mazei (strain ATCC BAA-159 / DSM 3647 / Goe1 / Go1 / JCM 11833 / OCM 88) (Methanosarcina frisia).